Consider the following 667-residue polypeptide: uncharacterized protein (667 aa).

This is an uncharacterized protein from Mycoplasma genitalium (strain ATCC 33530 / DSM 19775 / NCTC 10195 / G37) (Mycoplasmoides genitalium).